Here is a 351-residue protein sequence, read N- to C-terminus: Mannonate dehydratase (351 aa).

It belongs to the mannonate dehydratase family. It depends on Fe(2+) as a cofactor. The cofactor is Mn(2+).

It catalyses the reaction D-mannonate = 2-dehydro-3-deoxy-D-gluconate + H2O. Its pathway is carbohydrate metabolism; pentose and glucuronate interconversion. In terms of biological role, catalyzes the dehydration of D-mannonate. The protein is Mannonate dehydratase of Clostridium acetobutylicum (strain ATCC 824 / DSM 792 / JCM 1419 / IAM 19013 / LMG 5710 / NBRC 13948 / NRRL B-527 / VKM B-1787 / 2291 / W).